The following is a 350-amino-acid chain: RNA 3'-terminal phosphate cyclase (350 aa).

ATP-binding positions include Gln-107 and 290-294 (FLGDQ). The Tele-AMP-histidine intermediate role is filled by His-316.

This sequence belongs to the RNA 3'-terminal cyclase family. Type 1 subfamily.

It localises to the cytoplasm. The enzyme catalyses a 3'-end 3'-phospho-ribonucleotide-RNA + ATP = a 3'-end 2',3'-cyclophospho-ribonucleotide-RNA + AMP + diphosphate. Functionally, catalyzes the conversion of 3'-phosphate to a 2',3'-cyclic phosphodiester at the end of RNA. The mechanism of action of the enzyme occurs in 3 steps: (A) adenylation of the enzyme by ATP; (B) transfer of adenylate to an RNA-N3'P to produce RNA-N3'PP5'A; (C) and attack of the adjacent 2'-hydroxyl on the 3'-phosphorus in the diester linkage to produce the cyclic end product. The biological role of this enzyme is unknown but it is likely to function in some aspects of cellular RNA processing. The sequence is that of RNA 3'-terminal phosphate cyclase from Gloeothece citriformis (strain PCC 7424) (Cyanothece sp. (strain PCC 7424)).